We begin with the raw amino-acid sequence, 179 residues long: MAKTAMAYKEKMKELSMLSLICSCFYPEPRNINIYTYDDMEVKQINKRASGQAFELILKPPSPISEAPRTLASPKKKDLSLEEIQKKLEAAEGRRKSQEAQVLKQLAEKREHEREVLQKALEENNNFSKMAEEKLILKMEQIKENREANLAAIIERLQEKERHAAEVRRNKELQVELSG.

Residues 1-26 (MAKTAMAYKEKMKELSMLSLICSCFY) form a membrane attachment region. A Phosphoserine modification is found at Ser16. 2 S-palmitoyl cysteine lipidation sites follow: Cys22 and Cys24. The 142-residue stretch at 38 to 179 (DDMEVKQINK…NKELQVELSG (142 aa)) folds into the SLD domain. Residues 39–96 (DMEVKQINKRASGQAFELILKPPSPISEAPRTLASPKKKDLSLEEIQKKLEAAEGRRK) are regulatory/phosphorylation domain. Ser50 is subject to Phosphoserine. Residues Ser62 and Ser73 each carry the phosphoserine; by MAPK8 modification. Residues 75–179 (KKKDLSLEEI…NKELQVELSG (105 aa)) are a coiled coil. Phosphoserine occurs at positions 80 and 97.

It belongs to the stathmin family. In terms of assembly, interacts with ITM2C. Interacts with MAPK8. Interacts with KIFBP. Interacts (via the N-terminal region) with CIB1 (via C-terminal region); the interaction is direct, occurs in a calcium-dependent manner and attenuates the neurite outgrowth inhibition of STMN2. In terms of processing, sumoylated. Post-translationally, phosphorylated by MAPK9 and MAPK10 in the developing brain cortex. Phosphorylated mostly by MAPK8. N-terminal palmitoylation promotes specific anchoring to the cytosolic leaflet of Golgi membranes and subsequent vesicular trafficking along dendrites and axons. Neuronal Stathmins are substrates for palmitoyltransferases ZDHHC3, ZDHHC7 and ZDHHC15. Expressed in neurons (at protein level). Present in growth cones and abundant in developing neurons.

The protein localises to the cytoplasm. It localises to the perinuclear region. Its subcellular location is the cell projection. The protein resides in the growth cone. It is found in the axon. The protein localises to the membrane. It localises to the golgi apparatus. Its subcellular location is the endosome. The protein resides in the lamellipodium. Functionally, regulator of microtubule stability. When phosphorylated by MAPK8, stabilizes microtubules and consequently controls neurite length in cortical neurons. In the developing brain, negatively regulates the rate of exit from multipolar stage and retards radial migration from the ventricular zone. This is Stathmin-2 (Stmn2) from Rattus norvegicus (Rat).